The following is a 211-amino-acid chain: ATP phosphoribosyltransferase (211 aa).

It belongs to the ATP phosphoribosyltransferase family. Short subfamily. Heteromultimer composed of HisG and HisZ subunits.

It is found in the cytoplasm. The catalysed reaction is 1-(5-phospho-beta-D-ribosyl)-ATP + diphosphate = 5-phospho-alpha-D-ribose 1-diphosphate + ATP. It functions in the pathway amino-acid biosynthesis; L-histidine biosynthesis; L-histidine from 5-phospho-alpha-D-ribose 1-diphosphate: step 1/9. Catalyzes the condensation of ATP and 5-phosphoribose 1-diphosphate to form N'-(5'-phosphoribosyl)-ATP (PR-ATP). Has a crucial role in the pathway because the rate of histidine biosynthesis seems to be controlled primarily by regulation of HisG enzymatic activity. The protein is ATP phosphoribosyltransferase of Pseudomonas putida (strain ATCC 700007 / DSM 6899 / JCM 31910 / BCRC 17059 / LMG 24140 / F1).